Here is a 523-residue protein sequence, read N- to C-terminus: Endoglucanase 19 (523 aa).

The signal sequence occupies residues 1–52 (MCSWSLSSHTLTSPVRQAAMEPKSSSCGGAGIRLRLLVVLHLLLLVPSSAMA). The active-site Nucleophile is Asp-107. N-linked (GlcNAc...) asparagine glycosylation is present at Asn-279. Active-site residues include His-442, Asp-493, and Glu-502.

Belongs to the glycosyl hydrolase 9 (cellulase E) family.

The protein localises to the secreted. It carries out the reaction Endohydrolysis of (1-&gt;4)-beta-D-glucosidic linkages in cellulose, lichenin and cereal beta-D-glucans.. The chain is Endoglucanase 19 from Oryza sativa subsp. japonica (Rice).